Here is a 59-residue protein sequence, read N- to C-terminus: Large ribosomal subunit protein uL30 (59 aa).

It belongs to the universal ribosomal protein uL30 family. As to quaternary structure, part of the 50S ribosomal subunit.

This is Large ribosomal subunit protein uL30 from Proteus mirabilis (strain HI4320).